A 321-amino-acid polypeptide reads, in one-letter code: Taste receptor type 2 member 135 (321 aa).

The Extracellular portion of the chain corresponds to methionine 1–threonine 28. The helical transmembrane segment at leucine 29–isoleucine 49 threads the bilayer. The Cytoplasmic segment spans residues alanine 50–arginine 75. Residues phenylalanine 76–phenylalanine 96 form a helical membrane-spanning segment. Topologically, residues proline 97–asparagine 106 are extracellular. Residues leucine 107–tyrosine 127 traverse the membrane as a helical segment. At cysteine 128–tryptophan 149 the chain is on the cytoplasmic side. The helical transmembrane segment at valine 150–isoleucine 170 threads the bilayer. Over glycine 171–lysine 207 the chain is Extracellular. Asparagine 188 is a glycosylation site (N-linked (GlcNAc...) asparagine). Residues isoleucine 208 to serine 228 form a helical membrane-spanning segment. Topologically, residues leucine 229 to lysine 253 are cytoplasmic. The helical transmembrane segment at alanine 254–leucine 274 threads the bilayer. The Extracellular segment spans residues serine 275–arginine 286. A helical membrane pass occupies residues tyrosine 287 to leucine 307. The Cytoplasmic portion of the chain corresponds to serine 308 to cysteine 321.

It belongs to the G-protein coupled receptor T2R family.

Its subcellular location is the membrane. Functionally, putative taste receptor which may play a role in the perception of bitterness. This Rattus norvegicus (Rat) protein is Taste receptor type 2 member 135.